We begin with the raw amino-acid sequence, 107 residues long: Phosphoribosyl-ATP pyrophosphatase (107 aa).

This sequence belongs to the PRA-PH family.

It localises to the cytoplasm. It carries out the reaction 1-(5-phospho-beta-D-ribosyl)-ATP + H2O = 1-(5-phospho-beta-D-ribosyl)-5'-AMP + diphosphate + H(+). It functions in the pathway amino-acid biosynthesis; L-histidine biosynthesis; L-histidine from 5-phospho-alpha-D-ribose 1-diphosphate: step 2/9. This Rhizobium etli (strain CIAT 652) protein is Phosphoribosyl-ATP pyrophosphatase.